Here is an 85-residue protein sequence, read N- to C-terminus: Translation initiation factor IF-1 2 (85 aa).

An S1-like domain is found at 1-72; that stretch reads MAKEELIEMQ…TKGRITFRHL (72 aa).

Belongs to the IF-1 family. Component of the 30S ribosomal translation pre-initiation complex which assembles on the 30S ribosome in the order IF-2 and IF-3, IF-1 and N-formylmethionyl-tRNA(fMet); mRNA recruitment can occur at any time during PIC assembly.

It localises to the cytoplasm. Functionally, one of the essential components for the initiation of protein synthesis. Stabilizes the binding of IF-2 and IF-3 on the 30S subunit to which N-formylmethionyl-tRNA(fMet) subsequently binds. Helps modulate mRNA selection, yielding the 30S pre-initiation complex (PIC). Upon addition of the 50S ribosomal subunit IF-1, IF-2 and IF-3 are released leaving the mature 70S translation initiation complex. The polypeptide is Translation initiation factor IF-1 2 (Paracidovorax citrulli (strain AAC00-1) (Acidovorax citrulli)).